The following is a 468-amino-acid chain: Methylenetetrahydrofolate--tRNA-(uracil-5-)-methyltransferase TrmFO (468 aa).

Residue 10 to 15 (GGGLAG) participates in FAD binding.

Belongs to the MnmG family. TrmFO subfamily. FAD is required as a cofactor.

It localises to the cytoplasm. The enzyme catalyses uridine(54) in tRNA + (6R)-5,10-methylene-5,6,7,8-tetrahydrofolate + NADH + H(+) = 5-methyluridine(54) in tRNA + (6S)-5,6,7,8-tetrahydrofolate + NAD(+). The catalysed reaction is uridine(54) in tRNA + (6R)-5,10-methylene-5,6,7,8-tetrahydrofolate + NADPH + H(+) = 5-methyluridine(54) in tRNA + (6S)-5,6,7,8-tetrahydrofolate + NADP(+). Functionally, catalyzes the folate-dependent formation of 5-methyl-uridine at position 54 (M-5-U54) in all tRNAs. The polypeptide is Methylenetetrahydrofolate--tRNA-(uracil-5-)-methyltransferase TrmFO (Chelativorans sp. (strain BNC1)).